The chain runs to 425 residues: uncharacterized protein (425 aa).

In terms of domain architecture, HD spans 55–181; sequence RYAHSLGVYE…DLDTDRMDYL (127 aa).

This is an uncharacterized protein from Mycoplasma genitalium (strain ATCC 33530 / DSM 19775 / NCTC 10195 / G37) (Mycoplasmoides genitalium).